Here is a 37-residue protein sequence, read N- to C-terminus: Large ribosomal subunit protein bL36c (37 aa).

This sequence belongs to the bacterial ribosomal protein bL36 family.

Its subcellular location is the plastid. The sequence is that of Large ribosomal subunit protein bL36c from Cuscuta gronovii (Common dodder).